The sequence spans 435 residues: MRKIIAGVFIFVFLISNLYADLVAEVTTGVIQKPLVTVVSDNVVDQFPQQVNFVIVADLNHNAKLQANDTIKYEIKQKQNIPWKSLKSDYVVLTKYTNNSYNNYTVEVQILKRNDTSYLQAITYKNINVSLMRALAHKISNYVYQKLTGNQGFFLTKLAYVKVSNPYARYGRLYELIISDYDGYNKHVVLRQTDNPIATPSWSNDGRYIVYSSYSGGSMGVYTLEIATGKVTRITNYKGINSSPSFSPDGKEIALALSKGYSDQTNIYIMNLSTKALKRITINGINTAPKFSPNGQSIVFTSDREGRPNIYVASVNSKYPQSSILSTKIHQAYEPNYTPDGKNIVFMNQSSRTSGTQIADFNLANGSVTNITNGKADSSPTVSPYGDMVAYISTNTRGYSSLDMVSLDGDNHFNIETADNGNILIQSPSWSPKNF.

A signal peptide spans 1–20 (MRKIIAGVFIFVFLISNLYA).

It belongs to the TolB family. As to quaternary structure, the Tol-Pal system is composed of five core proteins: the inner membrane proteins TolA, TolQ and TolR, the periplasmic protein TolB and the outer membrane protein Pal. They form a network linking the inner and outer membranes and the peptidoglycan layer.

Its subcellular location is the periplasm. Functionally, part of the Tol-Pal system, which plays a role in outer membrane invagination during cell division and is important for maintaining outer membrane integrity. The sequence is that of Tol-Pal system protein TolB from Francisella tularensis subsp. mediasiatica (strain FSC147).